The following is a 395-amino-acid chain: Elongation factor Tu (395 aa).

Positions 10–204 constitute a tr-type G domain; that stretch reads KPHVNIGTIG…NVDEYIPLPQ (195 aa). The G1 stretch occupies residues 19–26; that stretch reads GHVDHGKT. GTP is bound at residue 19 to 26; the sequence is GHVDHGKT. Residue T26 participates in Mg(2+) binding. Positions 60 to 64 are G2; that stretch reads GITIN. Residues 81–84 are G3; sequence DCPG. GTP-binding positions include 81–85 and 136–139; these read DCPGH and NKVD. The G4 stretch occupies residues 136-139; sequence NKVD. Residues 174-176 are G5; it reads SAL.

Belongs to the TRAFAC class translation factor GTPase superfamily. Classic translation factor GTPase family. EF-Tu/EF-1A subfamily. Monomer.

The protein resides in the cytoplasm. It carries out the reaction GTP + H2O = GDP + phosphate + H(+). GTP hydrolase that promotes the GTP-dependent binding of aminoacyl-tRNA to the A-site of ribosomes during protein biosynthesis. This Amoebophilus asiaticus (strain 5a2) protein is Elongation factor Tu.